Here is a 512-residue protein sequence, read N- to C-terminus: Sporulation-regulated protein 3 (512 aa).

The segment at 31 to 68 is disordered; the sequence is RQSSQGQYAVDSHPPKSPELKHRRQRSSSFVNGKCRNR. The region spanning 106–365 is the Septin-type G domain; that stretch reads NGIDFTLMVA…EKCRSEMLRT (260 aa). Residues 116-123 form a G1 motif region; the sequence is GQSGLGKT. GTP-binding positions include 116–123, Gly168, 247–255, and Arg315; these read GQSGLGKT and KSDLLTKEE. Residues 165–168 form a G3 motif region; that stretch reads DTPG. A G4 motif region spans residues 246–249; that stretch reads AKSD. Coiled coils occupy residues 376-406 and 451-496; these read TKSV…LKNY and RDWK…KSSN.

Belongs to the TRAFAC class TrmE-Era-EngA-EngB-Septin-like GTPase superfamily. Septin GTPase family. In terms of assembly, interacts with other septin proteins such as SPR28 to form a ring at the bud neck.

It localises to the prospore membrane. Its subcellular location is the bud neck. Functionally, septins are GTPases involved in cytokinesis that assemble into filaments and form a ring at the cleavage site. May act by recruiting MYO1 and HOF1, a protein involved in septation, to the site of cleavage. Septins are also involved in cell morphogenesis, bud site selection, chitin deposition, cell cycle regulation, cell compartmentalization and spore wall formation. The polypeptide is Sporulation-regulated protein 3 (SPR3) (Saccharomyces cerevisiae (strain ATCC 204508 / S288c) (Baker's yeast)).